The primary structure comprises 467 residues: F-box/kelch-repeat protein SKIP11 (467 aa).

The interval 77 to 117 (LSGGEEQADAAIGDGSSSRQEQEQQSDFNDNGGDSSDSHSL) is disordered. A compositionally biased stretch (low complexity) spans 92–111 (SSSRQEQEQQSDFNDNGGDS). The F-box domain maps to 116–163 (SLINEIGRDNSIDCLIRCSRSDYGSIASLNRNFRSLVKSGEIYRLRRQ). Kelch repeat units lie at residues 159 to 210 (RLRR…KESL), 215 to 259 (DLLV…SLGE), 261 to 307 (AIFA…FMDG), 308 to 356 (KFYV…DMSP), and 365 to 411 (AVVN…GLAF).

As to quaternary structure, part of a SCF (ASK-cullin-F-box) protein ligase complex. Interacts with SKP1A/ASK1 and SPK1B/ASK2.

Its subcellular location is the nucleus. The protein operates within protein modification; protein ubiquitination. Functionally, component of SCF(ASK-cullin-F-box) E3 ubiquitin ligase complexes, which may mediate the ubiquitination and subsequent proteasomal degradation of target proteins. This Arabidopsis thaliana (Mouse-ear cress) protein is F-box/kelch-repeat protein SKIP11 (SKIP11).